A 106-amino-acid chain; its full sequence is Large ribosomal subunit protein eL42 (106 aa).

It belongs to the eukaryotic ribosomal protein eL42 family.

In Candida tropicalis (Yeast), this protein is Large ribosomal subunit protein eL42 (RPL44).